A 271-amino-acid polypeptide reads, in one-letter code: L-aspartate dehydrogenase (271 aa).

Positions 124 and 192 each coordinate NAD(+). Residue histidine 222 is part of the active site.

It belongs to the L-aspartate dehydrogenase family.

It carries out the reaction L-aspartate + NADP(+) + H2O = oxaloacetate + NH4(+) + NADPH + H(+). The enzyme catalyses L-aspartate + NAD(+) + H2O = oxaloacetate + NH4(+) + NADH + H(+). The protein operates within cofactor biosynthesis; NAD(+) biosynthesis; iminoaspartate from L-aspartate (dehydrogenase route): step 1/1. Its function is as follows. Specifically catalyzes the NAD or NADP-dependent dehydrogenation of L-aspartate to iminoaspartate. The chain is L-aspartate dehydrogenase from Methanococcoides burtonii (strain DSM 6242 / NBRC 107633 / OCM 468 / ACE-M).